The sequence spans 225 residues: UPF0758 protein BCE33L4198 (225 aa).

The 123-residue stretch at 103–225 folds into the MPN domain; it reads SIRNPEDCAR…FVSLKEKGHI (123 aa). Histidine 174, histidine 176, and aspartate 187 together coordinate Zn(2+). The short motif at 174–187 is the JAMM motif element; that stretch reads HNHPSGDPAPSRED.

The protein belongs to the UPF0758 family.

This Bacillus cereus (strain ZK / E33L) protein is UPF0758 protein BCE33L4198.